The following is a 486-amino-acid chain: Wax ester synthase/diacylglycerol acyltransferase 11 (486 aa).

Over 1–192 (MGEDKKTARE…CNSGFFNKIW (192 aa)) the chain is Cytoplasmic. Catalysis depends on H144, which acts as the Proton acceptor. The chain crosses the membrane as a helical span at residues 193 to 213 (WLFVGLWFILRLLFNTFVDIL). Residues 214–486 (MFALTIFVLR…LERGLYEIEV (273 aa)) lie on the Extracellular side of the membrane.

The protein in the N-terminal section; belongs to the long-chain O-acyltransferase family. As to expression, mostly expressed in inflorescences and flowers, especially at the periphery of petal epidermal cells.

The protein resides in the cell membrane. The protein localises to the endoplasmic reticulum membrane. The catalysed reaction is an acyl-CoA + a 1,2-diacyl-sn-glycerol = a triacyl-sn-glycerol + CoA. The enzyme catalyses a long chain fatty alcohol + a fatty acyl-CoA = a wax ester + CoA. The protein operates within glycerolipid metabolism; triacylglycerol biosynthesis. It functions in the pathway lipid metabolism. Functionally, bifunctional wax ester synthase/diacylglycerol acyltransferase. Involved in cuticular wax biosynthesis. Required for petals development, probably by mediating the production of fatty acids at the plasma membrane in the petal epidermis acting as lubricants that makes petal elongation smooth in narrow space between the sepals and the anthers inside floral buds. The polypeptide is Wax ester synthase/diacylglycerol acyltransferase 11 (Arabidopsis thaliana (Mouse-ear cress)).